Reading from the N-terminus, the 952-residue chain is Isoleucine--tRNA ligase (952 aa).

The short motif at 58–68 (PYANGDIHIGH) is the 'HIGH' region element. Glu-576 is an L-isoleucyl-5'-AMP binding site. A 'KMSKS' region motif is present at residues 617-621 (KMSKS). Residue Lys-620 coordinates ATP. Zn(2+)-binding residues include Cys-915, Cys-918, Cys-935, and Cys-938.

The protein belongs to the class-I aminoacyl-tRNA synthetase family. IleS type 1 subfamily. Monomer. The cofactor is Zn(2+).

It localises to the cytoplasm. It carries out the reaction tRNA(Ile) + L-isoleucine + ATP = L-isoleucyl-tRNA(Ile) + AMP + diphosphate. In terms of biological role, catalyzes the attachment of isoleucine to tRNA(Ile). As IleRS can inadvertently accommodate and process structurally similar amino acids such as valine, to avoid such errors it has two additional distinct tRNA(Ile)-dependent editing activities. One activity is designated as 'pretransfer' editing and involves the hydrolysis of activated Val-AMP. The other activity is designated 'posttransfer' editing and involves deacylation of mischarged Val-tRNA(Ile). The protein is Isoleucine--tRNA ligase of Vibrio atlanticus (strain LGP32) (Vibrio splendidus (strain Mel32)).